Here is a 329-residue protein sequence, read N- to C-terminus: Terpene synthase 7 (329 aa).

Positions 99-104 (DDLYLE) match the DDxx(x)D/E motif motif. Positions 230–238 (NDIHSFNKE) match the NDxxSxxxD/E motif motif.

The protein belongs to the terpene synthase family.

In terms of biological role, terpene synthase that converts its substrate farnesyl diphosphate (FPP) into 6 yet unidentified sesquiterpenes. In Dictyostelium purpureum (Slime mold), this protein is Terpene synthase 7.